Consider the following 97-residue polypeptide: Co-chaperonin GroES (97 aa).

It belongs to the GroES chaperonin family. Heptamer of 7 subunits arranged in a ring. Interacts with the chaperonin GroEL.

Its subcellular location is the cytoplasm. Together with the chaperonin GroEL, plays an essential role in assisting protein folding. The GroEL-GroES system forms a nano-cage that allows encapsulation of the non-native substrate proteins and provides a physical environment optimized to promote and accelerate protein folding. GroES binds to the apical surface of the GroEL ring, thereby capping the opening of the GroEL channel. The sequence is that of Co-chaperonin GroES from Pectobacterium carotovorum subsp. carotovorum (strain PC1).